Here is a 518-residue protein sequence, read N- to C-terminus: Probable cytochrome P450 317a1 (518 aa).

Heme is bound at residue cysteine 461.

Belongs to the cytochrome P450 family. The cofactor is heme.

It is found in the endoplasmic reticulum membrane. Its subcellular location is the microsome membrane. May be involved in the metabolism of insect hormones and in the breakdown of synthetic insecticides. The chain is Probable cytochrome P450 317a1 (Cyp317a1) from Drosophila melanogaster (Fruit fly).